A 251-amino-acid chain; its full sequence is Anamorsin homolog (251 aa).

The interval 1-154 (MINFSNTLVI…AENPDFNKSD (154 aa)) is N-terminal SAM-like domain. The linker stretch occupies residues 155–167 (DDNNLVSSDEEIY). [2Fe-2S] cluster contacts are provided by Cys-170, Cys-181, Cys-184, and Cys-186. Residues 170-186 (CEDKKKVVNRVCDNCTC) form a fe-S binding site A region. Positions 216, 219, 227, and 230 each coordinate [4Fe-4S] cluster. 2 short sequence motifs (cx2C motif) span residues 216-219 (CGNC) and 227-230 (CGSC). Residues 216–230 (CGNCYLGDAFRCGSC) are fe-S binding site B.

It belongs to the anamorsin family. As to quaternary structure, monomer. [2Fe-2S] cluster serves as cofactor. The cofactor is [4Fe-4S] cluster.

It is found in the cytoplasm. Its subcellular location is the mitochondrion intermembrane space. Functionally, component of the cytosolic iron-sulfur (Fe-S) protein assembly (CIA) machinery. Required for the maturation of extramitochondrial Fe-S proteins. Part of an electron transfer chain functioning in an early step of cytosolic Fe-S biogenesis, facilitating the de novo assembly of a [4Fe-4S] cluster on the cytosolic Fe-S scaffold complex. Electrons are transferred from NADPH via a FAD- and FMN-containing diflavin oxidoreductase. Together with the diflavin oxidoreductase, also required for the assembly of the diferric tyrosyl radical cofactor of ribonucleotide reductase (RNR), probably by providing electrons for reduction during radical cofactor maturation in the catalytic small subunit. This Plasmodium yoelii yoelii protein is Anamorsin homolog.